Consider the following 517-residue polypeptide: Ribonuclease Y (517 aa).

The chain crosses the membrane as a helical span at residues 1–21 (MIEVLIGLGAGVVGVGAGYLY). A KH domain is found at 207–273 (LINVVNIKND…TRVIELLVED (67 aa)). Positions 333–426 (ALAHSLEVAH…VCAADALSAA (94 aa)) constitute an HD domain.

Belongs to the RNase Y family.

The protein localises to the cell membrane. Endoribonuclease that initiates mRNA decay. The polypeptide is Ribonuclease Y (Campylobacter concisus (strain 13826)).